A 219-amino-acid polypeptide reads, in one-letter code: Thiamine-phosphate synthase (219 aa).

Residues 44–48 (QFREK) and Asn79 contribute to the 4-amino-2-methyl-5-(diphosphooxymethyl)pyrimidine site. Mg(2+) is bound by residues Asp80 and Asp99. Residue Ser117 participates in 4-amino-2-methyl-5-(diphosphooxymethyl)pyrimidine binding. 143–145 (TST) serves as a coordination point for 2-[(2R,5Z)-2-carboxy-4-methylthiazol-5(2H)-ylidene]ethyl phosphate. Lys146 is a binding site for 4-amino-2-methyl-5-(diphosphooxymethyl)pyrimidine. 2-[(2R,5Z)-2-carboxy-4-methylthiazol-5(2H)-ylidene]ethyl phosphate contacts are provided by residues Gly175 and 195–196 (IS).

It belongs to the thiamine-phosphate synthase family. Requires Mg(2+) as cofactor.

The catalysed reaction is 2-[(2R,5Z)-2-carboxy-4-methylthiazol-5(2H)-ylidene]ethyl phosphate + 4-amino-2-methyl-5-(diphosphooxymethyl)pyrimidine + 2 H(+) = thiamine phosphate + CO2 + diphosphate. It catalyses the reaction 2-(2-carboxy-4-methylthiazol-5-yl)ethyl phosphate + 4-amino-2-methyl-5-(diphosphooxymethyl)pyrimidine + 2 H(+) = thiamine phosphate + CO2 + diphosphate. The enzyme catalyses 4-methyl-5-(2-phosphooxyethyl)-thiazole + 4-amino-2-methyl-5-(diphosphooxymethyl)pyrimidine + H(+) = thiamine phosphate + diphosphate. Its pathway is cofactor biosynthesis; thiamine diphosphate biosynthesis; thiamine phosphate from 4-amino-2-methyl-5-diphosphomethylpyrimidine and 4-methyl-5-(2-phosphoethyl)-thiazole: step 1/1. In terms of biological role, condenses 4-methyl-5-(beta-hydroxyethyl)thiazole monophosphate (THZ-P) and 2-methyl-4-amino-5-hydroxymethyl pyrimidine pyrophosphate (HMP-PP) to form thiamine monophosphate (TMP). This is Thiamine-phosphate synthase from Bacillus anthracis (strain A0248).